A 176-amino-acid polypeptide reads, in one-letter code: Lipoprotein signal peptidase (176 aa).

The next 3 helical transmembrane spans lie at 12–32, 67–87, and 94–116; these read WYWM…WVLA, WQRW…TIWL, and MWRL…IDRL. Catalysis depends on residues Asp123 and Asp141. Residues 137 to 157 form a helical membrane-spanning segment; it reads FNIADSAICVGAALIIIDSII.

It belongs to the peptidase A8 family.

Its subcellular location is the cell inner membrane. It carries out the reaction Release of signal peptides from bacterial membrane prolipoproteins. Hydrolyzes -Xaa-Yaa-Zaa-|-(S,diacylglyceryl)Cys-, in which Xaa is hydrophobic (preferably Leu), and Yaa (Ala or Ser) and Zaa (Gly or Ala) have small, neutral side chains.. It functions in the pathway protein modification; lipoprotein biosynthesis (signal peptide cleavage). In terms of biological role, this protein specifically catalyzes the removal of signal peptides from prolipoproteins. This chain is Lipoprotein signal peptidase, found in Shewanella woodyi (strain ATCC 51908 / MS32).